Reading from the N-terminus, the 938-residue chain is MSTMHLLTFALLFSCSFARAACDPKIVNIGAVLSTRKHEQMFREAVNQANKRHGSWKIQLNATSVTHKPNAIQMALSVCEDLISSQVYAILVSHPPTPNDHFTPTPVSYTAGFYRIPVLGLTTRMSIYSDKSIHLSFLRTVPPYSHQSSVWFEMMRVYNWNHIILLVSDDHEGRAAQKRLETLLEERESKAEKVLQFDPGTKNVTALLMEARDLEARVIILSASEDDAATVYRAAAMLNMTGSGYVWLVGEREISGNALRYAPDGIIGLQLINGKNESAHISDAVGVVAQAVHELLEKENITDPPRGCVGNTNIWKTGPLFKRVLMSSKYADGVTGRVEFNEDGDRKFANYSIMNLQNRKLVQVGIYNGTHVIPNDRKIIWPGGETEKPRGYQMSTRLKIVTIHQEPFVYVKPTMSDGTCKEEFTVNGDPVKKVICTGPNDTSPGSPRHTVPQCCYGFCVDLLIKLARTMNFTYEVHLVADGKFGTQERVNNSNKKEWNGMMGELLSGQADMIVAPLTINNERAQYIEFSKPFKYQGLTILVKKEIPRSTLDSFMQPFQSTLWLLVGLSVHVVAVMLYLLDRFSPFGRFKVNSEEEEEDALTLSSAMWFSWGVLLNSGIGEGAPRSFSARILGMVWAGFAMIIVASYTANLAAFLVLDRPEERITGINDPRLRNPSDKFIYATVKQSSVDIYFRRQVELSTMYRHMEKHNYESAAEAIQAVRDNKLHAFIWDSAVLEFEASQKCDLVTTGELFFRSGFGIGMRKDSPWKQNVSLSILKSHENGFMEDLDKTWVRYQECDSRSNAPATLTFENMAGVFMLVAGGIVAGIFLIFIEIAYKRHKDARRKQMQLAFAAVNVWRKNLQDRKSGRAEPDPKKKATFRAITSTLASSFKRRRSSKDTSTGGGRGALQNQKDTVLPRRAIEREEGQLQLCSRHRES.

Residues 1–18 (MSTMHLLTFALLFSCSFA) form the signal peptide. Residues 19–559 (RAACDPKIVN…TLDSFMQPFQ (541 aa)) lie on the Extracellular side of the membrane. N-linked (GlcNAc...) asparagine glycosylation is found at asparagine 61, asparagine 203, asparagine 239, asparagine 276, asparagine 300, asparagine 350, asparagine 368, asparagine 440, asparagine 471, and asparagine 491. Residues cysteine 79 and cysteine 308 are joined by a disulfide bond. Intrachain disulfides connect cysteine 420-cysteine 454 and cysteine 436-cysteine 455. Glycine is bound by residues proline 516, threonine 518, and arginine 523. Residues 560–580 (STLWLLVGLSVHVVAVMLYLL) form a helical membrane-spanning segment. The Cytoplasmic portion of the chain corresponds to 581–602 (DRFSPFGRFKVNSEEEEEDALT). Residues 603–624 (LSSAMWFSWGVLLNSGIGEGAP) constitute an intramembrane region (discontinuously helical). Residues 603–624 (LSSAMWFSWGVLLNSGIGEGAP) form a pore-forming region. Over 625–630 (RSFSAR) the chain is Cytoplasmic. The chain crosses the membrane as a helical span at residues 631-647 (ILGMVWAGFAMIIVASY). The Extracellular segment spans residues 648–812 (TANLAAFLVL…NAPATLTFEN (165 aa)). An N-linked (GlcNAc...) asparagine glycan is attached at asparagine 674. The glycine site is built by serine 688 and aspartate 732. Cysteines 744 and 798 form a disulfide. Asparagine 771 carries an N-linked (GlcNAc...) asparagine glycan. A helical transmembrane segment spans residues 813 to 833 (MAGVFMLVAGGIVAGIFLIFI). Over 834-938 (EIAYKRHKDA…LQLCSRHRES (105 aa)) the chain is Cytoplasmic. A Phosphoserine; by PKC modification is found at serine 889. The segment at 889-938 (SSFKRRRSSKDTSTGGGRGALQNQKDTVLPRRAIEREEGQLQLCSRHRES) is disordered. Serine 890 is subject to Phosphoserine. Serine 896 and serine 897 each carry phosphoserine; by PKC. Positions 916–927 (VLPRRAIEREEG) are enriched in basic and acidic residues.

Belongs to the glutamate-gated ion channel (TC 1.A.10.1) family. NR1/GRIN1 subfamily. As to quaternary structure, heterotetramer; the NMDAR subunits are modular and harbor tiered domains that function in concert to regulate opening and closing of the cation-selective ion channel pore. Forms heterotetrameric channels composed of two GluN1/zeta subunits (GRIN1), and two identical GluN2/epsilon subunits (GRIN2A, GRIN2B, GRIN2C or GRIN2D) or GluN3 subunits (GRIN3A or GRIN3B) (in vitro). Can also form heterotetrameric channels that contain at least two GluN1 subunits and at least two different GluN2 subunits (or a combination of one GluN2 and one GluN3 subunits) (in vitro). In vivo, the subunit composition may vary in function of the expression levels of the different subunits. Found in a complex with GRIN2A or GRIN2B, GRIN3A and PPP2CB. Found in a complex with GRIN2A or GRIN2B and GRIN3B. Interacts with SNX27 (via PDZ domain); the interaction is required for recycling to the plasma membrane when endocytosed and prevent degradation in lysosomes. Interacts with DLG4 and MPDZ. Interacts with LRFN1 and LRFN2. Interacts with MYZAP. Found in a complex with DLG4 and PRR7. Found in a complex with GRIN2B and PRR7. Interacts with PRR7; the interaction is reduced following NMDA receptor activity. NMDA is probably regulated by C-terminal phosphorylation of an isoform of GRIN1 by PKC. Dephosphorylated on Ser-897 probably by protein phosphatase 2A (PPP2CB). Its phosphorylated state is influenced by the formation of the NMDAR-PPP2CB complex and the NMDAR channel activity. As to expression, detected in brain (at protein level). Detected in brain.

The protein resides in the cell membrane. It localises to the postsynaptic cell membrane. The protein localises to the postsynaptic density membrane. It is found in the synaptic cell membrane. The enzyme catalyses Ca(2+)(in) = Ca(2+)(out). The catalysed reaction is Na(+)(in) = Na(+)(out). It catalyses the reaction K(+)(in) = K(+)(out). In terms of biological role, component of N-methyl-D-aspartate (NMDA) receptors (NMDARs) that function as heterotetrameric, ligand-gated cation channels with high calcium permeability and voltage-dependent block by Mg(2+). NMDARs participate in synaptic plasticity for learning and memory formation by contributing to the long-term potentiation (LTP). Channel activation requires binding of the neurotransmitter L-glutamate to the GluN2 subunit, glycine or D-serine binding to the GluN1 subunit, plus membrane depolarization to eliminate channel inhibition by Mg(2+). NMDARs mediate simultaneously the potasium efflux and the influx of calcium and sodium. Each GluN2 or GluN3 subunit confers differential attributes to channel properties, including activation, deactivation and desensitization kinetics, pH sensitivity, Ca2(+) permeability, and binding to allosteric modulators. This chain is Glutamate receptor ionotropic, NMDA 1, found in Mus musculus (Mouse).